Consider the following 114-residue polypeptide: Replication initiation control protein YabA (114 aa).

His-79, Cys-81, Cys-95, and Cys-98 together coordinate Zn(2+).

This sequence belongs to the YabA family. Homotetramer. Interacts with both DnaA and DnaN, acting as a bridge between these two proteins. Requires Zn(2+) as cofactor.

It is found in the cytoplasm. Its subcellular location is the nucleoid. Functionally, involved in control of chromosome replication initiation. Inhibits the cooperative binding of DnaA to the oriC region, thus negatively regulating initiation of chromosome replication. Inhibits the ability of DnaA-ATP to form a helix on DNA; does not disassemble preformed DnaA-DNA helices. Decreases the residence time of DnaA on the chromosome at its binding sites (oriC, replication forks and promoter-binding sites). Tethers DnaA to the replication machinery via the DNA polymerase beta sliding clamp subunit (dnaN). Associates with oriC and other DnaA targets on the chromosome in a DnaA-dependent manner. This Lactobacillus gasseri (strain ATCC 33323 / DSM 20243 / BCRC 14619 / CIP 102991 / JCM 1131 / KCTC 3163 / NCIMB 11718 / NCTC 13722 / AM63) protein is Replication initiation control protein YabA.